The sequence spans 86 residues: Putative antitoxin VapB5 (86 aa).

This sequence belongs to the phD/YefM antitoxin family. In terms of assembly, forms a complex with VapC5.

Its function is as follows. Probable antitoxin component of a probable type II toxin-antitoxin (TA) system. The cognate toxin is VapC5. This is Putative antitoxin VapB5 (vapB5) from Mycobacterium tuberculosis (strain CDC 1551 / Oshkosh).